A 249-amino-acid chain; its full sequence is 5'-nucleotidase SurE (249 aa).

Positions 9, 10, 40, and 92 each coordinate a divalent metal cation.

It belongs to the SurE nucleotidase family. A divalent metal cation serves as cofactor.

The protein localises to the cytoplasm. It catalyses the reaction a ribonucleoside 5'-phosphate + H2O = a ribonucleoside + phosphate. Nucleotidase that shows phosphatase activity on nucleoside 5'-monophosphates. The chain is 5'-nucleotidase SurE from Shewanella putrefaciens (strain CN-32 / ATCC BAA-453).